The primary structure comprises 185 residues: Large ribosomal subunit protein uL22 (185 aa).

Belongs to the universal ribosomal protein uL22 family. In terms of assembly, part of the 50S ribosomal subunit.

This protein binds specifically to 23S rRNA. It makes multiple contacts with different domains of the 23S rRNA in the assembled 50S subunit and ribosome. Functionally, the globular domain of the protein is located near the polypeptide exit tunnel on the outside of the subunit, while an extended beta-hairpin is found that lines the wall of the exit tunnel in the center of the 70S ribosome. The sequence is that of Large ribosomal subunit protein uL22 from Pyrobaculum aerophilum (strain ATCC 51768 / DSM 7523 / JCM 9630 / CIP 104966 / NBRC 100827 / IM2).